Consider the following 959-residue polypeptide: Isoleucine--tRNA ligase (959 aa).

The short motif at 66–76 (PYANGDLHIGH) is the 'HIGH' region element. An L-isoleucyl-5'-AMP-binding site is contributed by Glu-592. The 'KMSKS' region signature appears at 633-637 (KMSKS). Lys-636 contributes to the ATP binding site. Residues Cys-922, Cys-925, Cys-942, and Cys-945 each coordinate Zn(2+).

It belongs to the class-I aminoacyl-tRNA synthetase family. IleS type 1 subfamily. As to quaternary structure, monomer. Zn(2+) is required as a cofactor.

Its subcellular location is the cytoplasm. It catalyses the reaction tRNA(Ile) + L-isoleucine + ATP = L-isoleucyl-tRNA(Ile) + AMP + diphosphate. In terms of biological role, catalyzes the attachment of isoleucine to tRNA(Ile). As IleRS can inadvertently accommodate and process structurally similar amino acids such as valine, to avoid such errors it has two additional distinct tRNA(Ile)-dependent editing activities. One activity is designated as 'pretransfer' editing and involves the hydrolysis of activated Val-AMP. The other activity is designated 'posttransfer' editing and involves deacylation of mischarged Val-tRNA(Ile). The chain is Isoleucine--tRNA ligase from Ralstonia pickettii (strain 12J).